Here is an 856-residue protein sequence, read N- to C-terminus: Facilitated trehalose transporter Tret1 (856 aa).

Disordered stretches follow at residues methionine 1–lysine 27 and aspartate 62–serine 202. The Cytoplasmic portion of the chain corresponds to methionine 1–proline 389. Positions valine 69 to threonine 80 are enriched in polar residues. Residues glutamate 133–glutamine 142 show a composition bias toward basic and acidic residues. Over residues glycine 170–alanine 180 the composition is skewed to polar residues. Phosphoserine occurs at positions 247, 248, 249, 319, and 321. Positions leucine 326–serine 345 are disordered. Positions arginine 329–threonine 340 are enriched in polar residues. Residues isoleucine 390–glycine 410 form a helical membrane-spanning segment. The Extracellular portion of the chain corresponds to phenylalanine 411 to serine 439. N-linked (GlcNAc...) asparagine glycosylation occurs at asparagine 427. Residues tryptophan 440–isoleucine 460 traverse the membrane as a helical segment. At glutamate 461–threonine 472 the chain is on the cytoplasmic side. A helical membrane pass occupies residues alanine 473 to leucine 493. Over cysteine 494–arginine 496 the chain is Extracellular. Residues phenylalanine 497–threonine 517 form a helical membrane-spanning segment. Over valine 518 to glycine 527 the chain is Cytoplasmic. The helical transmembrane segment at leucine 528–methionine 548 threads the bilayer. A glycan (N-linked (GlcNAc...) asparagine) is linked at asparagine 549. Residues asparagine 549–serine 551 are Extracellular-facing. The helical transmembrane segment at methionine 552–proline 572 threads the bilayer. At glutamate 573–proline 635 the chain is on the cytoplasmic side. Residues leucine 636 to phenylalanine 656 traverse the membrane as a helical segment. The Extracellular portion of the chain corresponds to tyrosine 657 to asparagine 672. A helical transmembrane segment spans residues isoleucine 673–isoleucine 693. The Cytoplasmic portion of the chain corresponds to aspartate 694 to lysine 699. A helical transmembrane segment spans residues isoleucine 700 to phenylalanine 720. Over tyrosine 721–cysteine 739 the chain is Extracellular. Residues phenylalanine 740–glycine 760 traverse the membrane as a helical segment. The Cytoplasmic portion of the chain corresponds to glutamate 761–lysine 766. The chain crosses the membrane as a helical span at residues isoleucine 767–threonine 787. The Extracellular portion of the chain corresponds to lysine 788 to histidine 800. A helical membrane pass occupies residues glycine 801–valine 821. Residues proline 822 to methionine 856 lie on the Cytoplasmic side of the membrane. Serine 844 and serine 845 each carry phosphoserine.

Belongs to the major facilitator superfamily. Sugar transporter (TC 2.A.1.1) family. Trehalose transporter subfamily.

The protein localises to the cell membrane. Low-capacity facilitative transporter for trehalose. Does not transport maltose, sucrose or lactose. Mediates the bidirectional transfer of trehalose. Responsible for the transport of trehalose synthesized in the fat body and the incorporation of trehalose into other tissues that require a carbon source, thereby regulating trehalose levels in the hemolymph. The sequence is that of Facilitated trehalose transporter Tret1 from Drosophila erecta (Fruit fly).